Here is a 570-residue protein sequence, read N- to C-terminus: BRICHOS domain-containing protein C09F5.1 (570 aa).

The Cytoplasmic segment spans residues 1–288; that stretch reads MVVEQIEVIE…YTPELLRSLC (288 aa). Polar residues-rich tracts occupy residues 93-107 and 228-246; these read SGAT…SGDS and TSTL…SLVS. Disordered stretches follow at residues 93 to 116 and 218 to 248; these read SGAT…GADR and SSWD…VSRE. Residues 289–309 traverse the membrane as a helical segment; the sequence is CILLLLLLLLFLMFIIFNAIF. The Extracellular segment spans residues 310–570; it reads NRYAVSEFLL…RKSINNATLV (261 aa). Residues 369–461 enclose the BRICHOS domain; it reads TAVDFNTGYV…IDDCEGAQWY (93 aa). Cys395 and Cys455 form a disulfide bridge.

Its subcellular location is the membrane. This Caenorhabditis elegans protein is BRICHOS domain-containing protein C09F5.1.